Reading from the N-terminus, the 428-residue chain is Aerobic C4-dicarboxylate transport protein (428 aa).

A run of 9 helical transmembrane segments spans residues 5 to 27, 47 to 64, 77 to 99, 141 to 163, 184 to 206, 216 to 238, 289 to 311, 326 to 348, and 353 to 375; these read LFKS…GHYY, MIIA…IAGM, ALLY…VNVV, VIGA…FGFA, VIFG…AMAF, LVQL…VVVL, VVGL…YLTM, IFHQ…GVTG, and VLAA…ILGI.

This sequence belongs to the dicarboxylate/amino acid:cation symporter (DAACS) (TC 2.A.23) family.

The protein resides in the cell inner membrane. Functionally, responsible for the transport of dicarboxylates such as succinate, fumarate, and malate from the periplasm across the membrane. The polypeptide is Aerobic C4-dicarboxylate transport protein (Salmonella typhi).